Here is a 38-residue protein sequence, read N- to C-terminus: Large ribosomal subunit protein bL36 (38 aa).

Belongs to the bacterial ribosomal protein bL36 family.

This chain is Large ribosomal subunit protein bL36, found in Flavobacterium psychrophilum (strain ATCC 49511 / DSM 21280 / CIP 103535 / JIP02/86).